The primary structure comprises 389 residues: Pre-mRNA-splicing factor PRP46 (389 aa).

WD repeat units lie at residues 83–123 (AHQG…LKAV), 126–165 (GHVLGIRSLCISKRHPYLFSGGEDKSLRCWDLERSNSDAG), 173–212 (GHLGGVYSIGLHPELDVLFSGGKDCVVRVWDIRSRVEAMT), 215–254 (GHTNDITSIETDYNDPQVITSSMDGTIRLWDLRKSKTELL), 257–298 (NHSK…NEFG), 308–347 (DNSRIINTLAINPVTNTLFSGYDDGKLEFYNYTTGNLQQS), and 356–389 (PEQSAIYASTFDMSGLRLLTCHGDKSIRIWGTSY).

The protein belongs to the WD repeat PRL1/PRL2 family. As to quaternary structure, associated with the spliceosome.

Its subcellular location is the cytoplasm. It is found in the nucleus. In terms of biological role, involved in pre-mRNA splicing and required for cell cycle progression at G2/M. The chain is Pre-mRNA-splicing factor PRP46 (PRP46) from Candida albicans (strain SC5314 / ATCC MYA-2876) (Yeast).